A 205-amino-acid polypeptide reads, in one-letter code: Holliday junction branch migration complex subunit RuvA (205 aa).

Positions 1–62 are domain I; it reads MFEYVTGYVE…EDIMALYGFK (62 aa). Positions 63–141 are domain II; it reads TREERLLFTK…DVVPDAFVDL (79 aa). The tract at residues 142 to 152 is flexible linker; it reads FSDEERFDEKK. Residues 153–205 form a domain III region; sequence GSSAELDEALEALRALGYAEREVSRVVPELLKESLTTDQYIKKALSLLLNGKR.

The protein belongs to the RuvA family. As to quaternary structure, homotetramer. Forms an RuvA(8)-RuvB(12)-Holliday junction (HJ) complex. HJ DNA is sandwiched between 2 RuvA tetramers; dsDNA enters through RuvA and exits via RuvB. An RuvB hexamer assembles on each DNA strand where it exits the tetramer. Each RuvB hexamer is contacted by two RuvA subunits (via domain III) on 2 adjacent RuvB subunits; this complex drives branch migration. In the full resolvosome a probable DNA-RuvA(4)-RuvB(12)-RuvC(2) complex forms which resolves the HJ.

The protein localises to the cytoplasm. In terms of biological role, the RuvA-RuvB-RuvC complex processes Holliday junction (HJ) DNA during genetic recombination and DNA repair, while the RuvA-RuvB complex plays an important role in the rescue of blocked DNA replication forks via replication fork reversal (RFR). RuvA specifically binds to HJ cruciform DNA, conferring on it an open structure. The RuvB hexamer acts as an ATP-dependent pump, pulling dsDNA into and through the RuvAB complex. HJ branch migration allows RuvC to scan DNA until it finds its consensus sequence, where it cleaves and resolves the cruciform DNA. The polypeptide is Holliday junction branch migration complex subunit RuvA (Bacillus cereus (strain AH187)).